A 414-amino-acid polypeptide reads, in one-letter code: 2,3-diketo-5-methylthiopentyl-1-phosphate enolase (414 aa).

Lysine 99 acts as the Proton acceptor in catalysis. Substrate-binding positions include lysine 148, 174–177 (KDDE), histidine 265, glycine 338, and 360–361 (GG). Positions 174, 176, and 177 each coordinate Mg(2+). Lysine 174 is subject to N6-carboxylysine.

It belongs to the RuBisCO large chain family. Type IV subfamily. Homodimer. It depends on Mg(2+) as a cofactor.

It catalyses the reaction 5-methylsulfanyl-2,3-dioxopentyl phosphate = 2-hydroxy-5-methylsulfanyl-3-oxopent-1-enyl phosphate. It participates in amino-acid biosynthesis; L-methionine biosynthesis via salvage pathway; L-methionine from S-methyl-5-thio-alpha-D-ribose 1-phosphate: step 3/6. Catalyzes the enolization of 2,3-diketo-5-methylthiopentyl-1-phosphate (DK-MTP-1-P) into 2-hydroxy-3-keto-5-methylthiopentenyl-1-phosphate (HK-MTPenyl-1-P). The protein is 2,3-diketo-5-methylthiopentyl-1-phosphate enolase of Bacillus cereus (strain B4264).